A 125-amino-acid chain; its full sequence is Glucose-1-phosphate adenylyltransferase small subunit (125 aa).

The protein belongs to the bacterial/plant glucose-1-phosphate adenylyltransferase family. Heterotetramer. In terms of tissue distribution, leaves.

Its subcellular location is the plastid. It localises to the chloroplast. The protein resides in the amyloplast. It carries out the reaction alpha-D-glucose 1-phosphate + ATP + H(+) = ADP-alpha-D-glucose + diphosphate. It participates in glycan biosynthesis; starch biosynthesis. Its activity is regulated as follows. Activated by 3'phosphoglycerate, inhibited by orthophosphate. Allosteric regulation. Its function is as follows. This protein plays a role in synthesis of starch. It catalyzes the synthesis of the activated glycosyl donor, ADP-glucose from Glc-1-P and ATP. This chain is Glucose-1-phosphate adenylyltransferase small subunit (GLG1), found in Zea mays (Maize).